The sequence spans 359 residues: Acyl-CoA desaturase (359 aa).

Residues 1 to 72 lie on the Cytoplasmic side of the membrane; that stretch reads MPAHLLQEEI…EGPKPKLEYV (72 aa). Residues 73 to 93 form a helical membrane-spanning segment; it reads WRNIILMGLLHLGALYGITLI. Asn-75 provides a ligand contact to substrate. Over 94 to 97 the chain is Lumenal; that stretch reads PTCK. Residues 98–118 form a helical membrane-spanning segment; the sequence is IYTFLWVLFYYVISALGITAG. The Cytoplasmic portion of the chain corresponds to 119 to 217; sequence VHRLWSHRTY…EKLVMFQRRY (99 aa). His-120 and His-125 together coordinate Fe cation. A Histidine box-1 motif is present at residues 120 to 125; that stretch reads HRLWSH. Substrate is bound by residues Asn-148, Arg-155, and Asp-156. Positions 157, 160, and 161 each coordinate Fe cation. The short motif at 157-161 is the Histidine box-2 element; the sequence is HRAHH. 2 residues coordinate substrate: Arg-188 and Lys-189. Ser-203 bears the Phosphoserine mark. The helical transmembrane segment at 218–237 threads the bilayer; the sequence is YKPGVLLLCFILPTLVPWYL. Topologically, residues 238-241 are lumenal; it reads WGES. Residues 242–263 form a helical membrane-spanning segment; that stretch reads FQNSLFFATFLRYAVVLNATWL. Residue Trp-262 coordinates substrate. Residues 264–359 are Cytoplasmic-facing; that stretch reads VNSAAHMYGY…RTGEESYKSG (96 aa). Residues His-269, His-298, His-301, and His-302 each contribute to the Fe cation site. Positions 298-302 match the Histidine box-3 motif; the sequence is HNYHH.

This sequence belongs to the fatty acid desaturase type 1 family. Requires Fe(2+) as cofactor.

It is found in the endoplasmic reticulum membrane. It carries out the reaction octadecanoyl-CoA + 2 Fe(II)-[cytochrome b5] + O2 + 2 H(+) = (9Z)-octadecenoyl-CoA + 2 Fe(III)-[cytochrome b5] + 2 H2O. In terms of biological role, stearoyl-CoA desaturase that utilizes O(2) and electrons from reduced cytochrome b5 to introduce the first double bond into saturated fatty acyl-CoA substrates. Catalyzes the insertion of a cis double bond at the delta-9 position into fatty acyl-CoA substrates including palmitoyl-CoA and stearoyl-CoA. Gives rise to a mixture of 16:1 and 18:1 unsaturated fatty acids. Plays an important role in lipid biosynthesis. Plays an important role in regulating the expression of genes that are involved in lipogenesis and in regulating mitochondrial fatty acid oxidation. Plays an important role in body energy homeostasis. Contributes to the biosynthesis of membrane phospholipids, cholesterol esters and triglycerides. The polypeptide is Acyl-CoA desaturase (SCD) (Ovis aries (Sheep)).